The primary structure comprises 152 residues: Ribosome maturation factor RimP (152 aa).

Belongs to the RimP family.

It is found in the cytoplasm. Required for maturation of 30S ribosomal subunits. The sequence is that of Ribosome maturation factor RimP from Alkalilimnicola ehrlichii (strain ATCC BAA-1101 / DSM 17681 / MLHE-1).